We begin with the raw amino-acid sequence, 452 residues long: Histone acetyltransferase type B subunit 2 (452 aa).

6 WD repeats span residues tyrosine 155 to glutamate 195, histidine 205 to serine 245, histidine 256 to alanine 296, lysine 300 to serine 340, serine 344 to serine 384, and glycine 401 to glutamate 441.

Belongs to the WD repeat RBAP46/RBAP48/MSI1 family. Component of the HAT-B complex composed of at least HAT1 and HAT2. The HAT-B complex binds to histone H4 tail.

The protein resides in the cytoplasm. The protein localises to the nucleus. Regulatory subunit of the histone acetylase B (HAT-B) complex. The complex acetylates 'Lys-12' of histone H4 which is required for telomeric silencing. In Yarrowia lipolytica (strain CLIB 122 / E 150) (Yeast), this protein is Histone acetyltransferase type B subunit 2 (HAT2).